Consider the following 325-residue polypeptide: 5-dehydro-2-deoxygluconokinase (325 aa).

It belongs to the carbohydrate kinase PfkB family.

It carries out the reaction 5-dehydro-2-deoxy-D-gluconate + ATP = 6-phospho-5-dehydro-2-deoxy-D-gluconate + ADP + H(+). Its pathway is polyol metabolism; myo-inositol degradation into acetyl-CoA; acetyl-CoA from myo-inositol: step 5/7. Its function is as follows. Catalyzes the phosphorylation of 5-dehydro-2-deoxy-D-gluconate (2-deoxy-5-keto-D-gluconate or DKG) to 6-phospho-5-dehydro-2-deoxy-D-gluconate (DKGP). This is 5-dehydro-2-deoxygluconokinase from Listeria monocytogenes serovar 1/2a (strain ATCC BAA-679 / EGD-e).